The following is an 807-amino-acid chain: Phenylalanine--tRNA ligase beta subunit (807 aa).

The tRNA-binding domain maps to 39–153 (SARSQGVVVG…EIPAVGTPVA (115 aa)). The B5 domain occupies 407–491 (RTPVPLQLRR…RLVGFDKFGS (85 aa)). The Mg(2+) site is built by aspartate 469, aspartate 475, glutamate 478, and glutamate 479. Residues 713 to 806 (PTVPASERDL…LSKQFKAELR (94 aa)) form the FDX-ACB domain.

The protein belongs to the phenylalanyl-tRNA synthetase beta subunit family. Type 1 subfamily. Tetramer of two alpha and two beta subunits. It depends on Mg(2+) as a cofactor.

The protein resides in the cytoplasm. It catalyses the reaction tRNA(Phe) + L-phenylalanine + ATP = L-phenylalanyl-tRNA(Phe) + AMP + diphosphate + H(+). The polypeptide is Phenylalanine--tRNA ligase beta subunit (Synechococcus sp. (strain CC9902)).